Consider the following 401-residue polypeptide: Short chain dehydrogenase/reductase dpchH (401 aa).

An N-linked (GlcNAc...) asparagine glycan is attached at N16. The chain crosses the membrane as a helical span at residues 51–71 (VRAVDVLFGTFLYVPLGILFL). NAD(+) contacts are provided by residues 72–80 (KKSLSGFGD), 99–100 (TG), and 118–120 (AKV). N242 carries N-linked (GlcNAc...) asparagine glycosylation. Y275 (proton acceptor) is an active-site residue. Residues 275-279 (YGTSK) and 308-310 (GTI) each bind NAD(+). N-linked (GlcNAc...) asparagine glycosylation is present at N386.

It localises to the membrane. It participates in secondary metabolite biosynthesis; terpenoid biosynthesis. Its function is as follows. Short chain dehydrogenase/reductase; part of the gene cluster that mediates the biosynthesis of the diterpenoid pyrones higginsianins A and B. The first step of the pathway is the synthesis of the alpha-pyrone moiety by the polyketide synthase dpchA via condensation of one acetyl-CoA starter unit with 3 malonyl-CoA units and 2 methylations. The alpha-pyrone is then combined with geranylgeranyl pyrophosphate (GGPP) formed by the GGPP synthase dpchD through the action of the prenyltransferase dpchC to yield a linear alpha-pyrone diterpenoid. Subsequent steps in the diterpenoid pyrone biosynthetic pathway involve the decalin core formation, which is initiated by the epoxidation of the C10-C11 olefin by the FAD-dependent oxidoreductase dpchE, and is followed by a cyclization cascade catalyzed by the terpene cyclase dpchB. The short chain dehydrogenase/reductase dpchG then oxidizes the 8S hydroxy group to a ketone and the short chain dehydrogenase/reductase dpchH reduces the ketone to the 8R hydroxy group to yield higginsianin B. Finally, the FAD-dependent oxidoreductase dpchF converts higginsianin B into higginsianin A. This chain is Short chain dehydrogenase/reductase dpchH, found in Colletotrichum higginsianum (strain IMI 349063) (Crucifer anthracnose fungus).